The chain runs to 336 residues: Pentalenene synthase (336 aa).

Residues Asp80, Asp84, Asn219, Ser223, and Glu227 each coordinate Mg(2+). Residues 80–84 (DDLFD) carry the DDXXD motif motif.

This sequence belongs to the terpene synthase family. Monomer. Requires Mg(2+) as cofactor.

It carries out the reaction (2E,6E)-farnesyl diphosphate = pentalenene + diphosphate. It functions in the pathway antibiotic biosynthesis; neopentalenolactone biosynthesis. Functionally, catalyzes the cyclization of farnesyl diphosphate (FPP) to the tricyclic sesquiterpene pentalenene in the biosynthesis of neopentalenolactone antibiotic. The polypeptide is Pentalenene synthase (ptlA) (Streptomyces avermitilis (strain ATCC 31267 / DSM 46492 / JCM 5070 / NBRC 14893 / NCIMB 12804 / NRRL 8165 / MA-4680)).